The chain runs to 644 residues: Exoribonuclease 2 (644 aa).

The RNB domain maps to 189–516 (RRDLTALNFV…NHRLLKAIVK (328 aa)). The region spanning 561–643 (DTRFAAEIID…ETRSIIARPV (83 aa)) is the S1 motif domain.

This sequence belongs to the RNR ribonuclease family. RNase II subfamily.

It localises to the cytoplasm. The enzyme catalyses Exonucleolytic cleavage in the 3'- to 5'-direction to yield nucleoside 5'-phosphates.. Functionally, involved in mRNA degradation. Hydrolyzes single-stranded polyribonucleotides processively in the 3' to 5' direction. This chain is Exoribonuclease 2, found in Enterobacter sp. (strain 638).